Reading from the N-terminus, the 307-residue chain is MGDMSDLDRQIDQLRRCELIKENEVKALCAKAREILVEESNVQRVDSPVTVCGDIHGQFYDLKELFRVGGDVPETNYLFMGDFVDRGFYSVETFLLLLALKVRYPDRITLIRGNHESRQITQVYGFYDECLRKYGSVTVWRYCTEIFDYLSLSAIIDGKIFCVHGGLSPSIQTLDQIRTIDRKQEVPHDGPMCDLLWSDPEDTTGWGVSPRGAGYLFGSDVVAQFNAANDIDMICRAHQLVMEGYKWHFNETVLTVWSAPNYCYRCGNVAAILELDEHLQKEFIIFEAAPQETRGIPSKKPVADYFL.

4 residues coordinate Mn(2+): Asp-54, His-56, Asp-82, and Asn-114. Residue His-115 is the Proton donor of the active site. 2 residues coordinate Mn(2+): His-164 and His-238. Residue Leu-307 is modified to Leucine methyl ester.

Belongs to the PPP phosphatase family. PP-4 (PP-X) subfamily. As to quaternary structure, serine/threonine-protein phosphatase 4 (PP4) occurs in different assemblies of the catalytic and one or more regulatory subunits. Mn(2+) serves as cofactor.

It is found in the cytoplasm. It localises to the cytoskeleton. The protein localises to the microtubule organizing center. The protein resides in the centrosome. The enzyme catalyses O-phospho-L-seryl-[protein] + H2O = L-seryl-[protein] + phosphate. It catalyses the reaction O-phospho-L-threonyl-[protein] + H2O = L-threonyl-[protein] + phosphate. Protein phosphatase that regulates many processes such as microtubule organization at centrosomes. This is Serine/threonine-protein phosphatase 4 catalytic subunit B (ppp4cb) from Danio rerio (Zebrafish).